The chain runs to 152 residues: Transcriptional regulator MraZ (152 aa).

2 consecutive SpoVT-AbrB domains span residues 5–52 and 81–124; these read ATLV…PLPE and ASEC…DETT.

This sequence belongs to the MraZ family. In terms of assembly, forms oligomers.

It is found in the cytoplasm. Its subcellular location is the nucleoid. In terms of biological role, negatively regulates its own expression and that of the subsequent genes in the proximal part of the division and cell wall (dcw) gene cluster. Acts by binding directly to DNA. May also regulate the expression of genes outside the dcw cluster. The polypeptide is Transcriptional regulator MraZ (Escherichia coli O45:K1 (strain S88 / ExPEC)).